The following is a 122-amino-acid chain: Small ribosomal subunit protein uS13c (122 aa).

The disordered stretch occupies residues 102–122 (RTRTNARTRRGAKKTVAGKKK).

It belongs to the universal ribosomal protein uS13 family. As to quaternary structure, part of the 30S ribosomal subunit.

The protein localises to the plastid. The protein resides in the chloroplast. Located at the top of the head of the 30S subunit, it contacts several helices of the 16S rRNA. In Guillardia theta (Cryptophyte), this protein is Small ribosomal subunit protein uS13c.